We begin with the raw amino-acid sequence, 200 residues long: Recoverin (200 aa).

Residue glycine 2 is the site of N-myristoyl glycine attachment. EF-hand domains are found at residues 25–60 (EEELCSWYQSFLKDCPTGRITQQQFQSIYAKFFPDT), 61–96 (DPKAYAQHVFRSFDSNLDGTLDFKEYVIALHMTTAG), 97–132 (KTNQKLEWAFSLYDVDGNGTISKNEVLEIVMAIFKM), and 147–182 (TPEKRAEKIWKYFGKNDDDKLTEKEFIEGTLANKEI). Residue cysteine 39 is modified to Cysteine sulfenic acid (-SOH). Positions 74, 76, 78, 80, 85, 110, 112, 114, 116, and 121 each coordinate Ca(2+). The tract at residues 189 to 192 (EPQK) is interaction with GRK1.

The protein belongs to the recoverin family. Homodimer; disulfide-linked. Homodimerization is caused by prolonged intense illumination. May form a complex composed of RHO, GRK1 and RCVRN in a Ca(2+)-dependent manner; RCVRN prevents the interaction between GRK1 and RHO. Interacts (via C-terminus) with GRK1 (via N-terminus); the interaction is Ca(2+)-dependent. The N-terminal glycine is linked to one of four different types of acyl groups. The most abundant is myristoleate (14:1), but 14:0, 14:2, and 12:0 acyl residues are also present. The Ca(2+) induced exposure of the myristoyl group, known as the calcium-myristoyl switch, promotes RCVRN binding to the photoreceptor cell membranes only when intracellular Ca(2+) concentration is high. In terms of processing, oxidation on Cys-39 occurs in response to prolonged intense illumination and results in the formation of disulfide homodimers, and to a lesser extent disulfide-linked heterodimers. In terms of tissue distribution, retina and pineal gland.

The protein localises to the photoreceptor inner segment. The protein resides in the cell projection. It is found in the cilium. Its subcellular location is the photoreceptor outer segment. It localises to the photoreceptor outer segment membrane. The protein localises to the perikaryon. Its function is as follows. Acts as a calcium sensor and regulates phototransduction of cone and rod photoreceptor cells. Modulates light sensitivity of cone photoreceptor in dark and dim conditions. In response to high Ca(2+) levels induced by low light levels, prolongs RHO/rhodopsin activation in rod photoreceptor cells by binding to and inhibiting GRK1-mediated phosphorylation of RHO/rhodopsin. Plays a role in scotopic vision/enhances vision in dim light by enhancing signal transfer between rod photoreceptors and rod bipolar cells. Improves rod photoreceptor sensitivity in dim light and mediates response of rod photoreceptors to facilitate detection of change and motion in bright light. This Homo sapiens (Human) protein is Recoverin (RCVRN).